Reading from the N-terminus, the 68-residue chain is Large ribosomal subunit protein uL30 (68 aa).

Belongs to the universal ribosomal protein uL30 family. In terms of assembly, part of the 50S ribosomal subunit.

The polypeptide is Large ribosomal subunit protein uL30 (Bartonella tribocorum (strain CIP 105476 / IBS 506)).